Consider the following 369-residue polypeptide: Glutamine synthetase (369 aa).

Residues 23 to 102 (VIAEYIWVDS…VLAECWNNDG (80 aa)) form the GS beta-grasp domain. The region spanning 109–369 (HRHEAAKLFE…MSKEFERESS (261 aa)) is the GS catalytic domain.

The protein belongs to the glutamine synthetase family. Homooctamer.

The protein localises to the cytoplasm. It carries out the reaction L-glutamate + NH4(+) + ATP = L-glutamine + ADP + phosphate + H(+). The sequence is that of Glutamine synthetase (GLN1) from Eremothecium gossypii (strain ATCC 10895 / CBS 109.51 / FGSC 9923 / NRRL Y-1056) (Yeast).